The chain runs to 572 residues: Myb-like protein Y (572 aa).

The segment covering 196–211 has biased composition (polar residues); it reads QSQSQLPTATNNNNKQ. Residues 196–283 form a disordered region; it reads QSQSQLPTAT…NNNNNNNNNE (88 aa). 2 stretches are compositionally biased toward low complexity: residues 222–237 and 260–281; these read TATATATTTATTTTTT and NDNNNNTNNNNNNNNNNNNNNN. One can recognise a Myb-like domain in the interval 311–360; it reads PWTVEDQKKLEDALTKYPPSRFSSVSRWQMVSKELGISPKAVALRYNQML. The segment at 367–456 is disordered; sequence KPSLQQQQQQ…TTVTPNMTTP (90 aa). Composition is skewed to low complexity over residues 371-392 and 414-425; these read QQQQQQQQQQQQQPTTTTTTTT and SSFSSPSSSSKE. Basic and acidic residues predominate over residues 426 to 435; that stretch reads SPNKKEKTTH. Low complexity predominate over residues 436–455; sequence DTTTTTNTATTTTVTPNMTT.

The protein is Myb-like protein Y (mybY) of Dictyostelium discoideum (Social amoeba).